We begin with the raw amino-acid sequence, 841 residues long: 27S pre-rRNA (guanosine(2922)-2'-O)-methyltransferase (841 aa).

Gly-58, Trp-60, Asp-78, Asp-94, and Asp-119 together coordinate S-adenosyl-L-methionine. The Proton acceptor role is filled by Lys-159. Residues 360–389 (QEKQRLNVKRERRRKNEMKQKELQRMQMNM) are a coiled coil. Residues Ser-455 and Ser-464 each carry the phosphoserine modification. Disordered stretches follow at residues 480–534 (RDAK…DDEA) and 565–654 (NNVE…HSRD). The span at 505 to 517 (SLEKKEEEGKDYI) shows a compositional bias: basic and acidic residues. Acidic residues predominate over residues 518-534 (EDNDDEGVEGDSDDDEA). Phosphoserine is present on Ser-529. The span at 574–585 (NTVNDGIMSSES) shows a compositional bias: polar residues. A compositionally biased stretch (basic and acidic residues) spans 598-607 (HEEMHQKQDE). Acidic residues-rich tracts occupy residues 608-621 (ADSS…DSDF) and 629-641 (ASEE…DSEE). The segment covering 642–654 (EKNQTKKEKHSRD) has biased composition (basic and acidic residues).

Belongs to the class I-like SAM-binding methyltransferase superfamily. RNA methyltransferase RlmE family. SPB1 subfamily. In terms of assembly, component of the nucleolar and nucleoplasmic pre-60S ribosomal particle. Interacts with the snoRNA-associated proteins NOP1 and NOP58.

Its subcellular location is the nucleus. It localises to the nucleolus. It carries out the reaction guanosine(2922) in 27S pre-rRNA + S-adenosyl-L-methionine = 2'-O-methylguanosine(2922) in 27S pre-rRNA + S-adenosyl-L-homocysteine + H(+). Functionally, required for proper assembly of pre-ribosomal particles during the biogenesis of the 60S ribosomal subunit. Specifically methylates the guanosine in position 2922 of the 25S rRNA at the stage of 27S pre-rRNA maturation. Also methylates the uridine in position 2921 in the absence of methylation of this residue guided by snoRNA snR52 at the stage of 35S pre-rRNA maturation. This chain is 27S pre-rRNA (guanosine(2922)-2'-O)-methyltransferase, found in Saccharomyces cerevisiae (strain ATCC 204508 / S288c) (Baker's yeast).